The chain runs to 246 residues: UPF0736 protein GK0808 (246 aa).

The protein belongs to the UPF0736 family.

In Geobacillus kaustophilus (strain HTA426), this protein is UPF0736 protein GK0808.